The following is a 304-amino-acid chain: Putative S-adenosyl-L-methionine-dependent methyltransferase MMAR_1057 (304 aa).

Residues aspartate 130 and aspartate 159 to leucine 160 contribute to the S-adenosyl-L-methionine site.

This sequence belongs to the UPF0677 family.

Its function is as follows. Exhibits S-adenosyl-L-methionine-dependent methyltransferase activity. This chain is Putative S-adenosyl-L-methionine-dependent methyltransferase MMAR_1057, found in Mycobacterium marinum (strain ATCC BAA-535 / M).